The chain runs to 393 residues: Sulfate adenylyltransferase (393 aa).

Belongs to the sulfate adenylyltransferase family.

The enzyme catalyses sulfate + ATP + H(+) = adenosine 5'-phosphosulfate + diphosphate. It participates in sulfur metabolism; hydrogen sulfide biosynthesis; sulfite from sulfate: step 1/3. The polypeptide is Sulfate adenylyltransferase (Synechococcus sp. (strain JA-3-3Ab) (Cyanobacteria bacterium Yellowstone A-Prime)).